A 364-amino-acid polypeptide reads, in one-letter code: Protein Wnt-16 (364 aa).

The first 29 residues, Met1 to Gly29, serve as a signal peptide directing secretion. Disulfide bonds link Cys81-Cys92, Cys138-Cys146, and Cys148-Cys167. A glycan (N-linked (GlcNAc...) asparagine) is linked at Asn142. Asn188 is a glycosylation site (N-linked (GlcNAc...) asparagine). Intrachain disulfides connect Cys220-Cys234, Cys222-Cys229, Cys293-Cys324, Cys309-Cys319, Cys323-Cys363, Cys339-Cys354, Cys341-Cys351, and Cys346-Cys347. The O-palmitoleoyl serine; by PORCN moiety is linked to residue Ser226. Asn310 carries N-linked (GlcNAc...) asparagine glycosylation.

The protein belongs to the Wnt family. Post-translationally, palmitoleoylation is required for efficient binding to frizzled receptors. Depalmitoleoylation leads to Wnt signaling pathway inhibition.

The protein localises to the secreted. Its subcellular location is the extracellular space. The protein resides in the extracellular matrix. Ligand for members of the frizzled family of seven transmembrane receptors. Probable developmental protein. May be a signaling molecule which affects the development of discrete regions of tissues. Is likely to signal over only few cell diameters. In Mus musculus (Mouse), this protein is Protein Wnt-16 (Wnt16).